The primary structure comprises 76 residues: Defensin-like protein 71 (76 aa).

An N-terminal signal peptide occupies residues 1 to 22 (MAMTQVFVIFILLATSLCNSNA). Cystine bridges form between Cys-36/Cys-74, Cys-40/Cys-63, Cys-49/Cys-72, and Cys-53/Cys-73.

The protein belongs to the DEFL family.

It localises to the secreted. This is Defensin-like protein 71 (LCR84) from Arabidopsis thaliana (Mouse-ear cress).